The chain runs to 341 residues: MAARELILAFESSCDETSVAVVENGDTILSNIIATQIKSHQRFGGVVPEVASRHHVEQITLVTDAALKEAGVTYDDLTAVAVTYGPGLVGALLIGVTAAKTIAYAHHLPLIPVNHMAGHIYAARFVKPLAYPLLALAVSGGHTELVYMRSAGEFEIIGDTRDDAAGEAYDKVGRILGIPYPAGKEVDRLAHLGQDTFHFPRAMDKEDNLDFSFSGLKSAVINTVHHAHQLGQELSREDLAASFQAAVVDVLVHKTQKALHQYPVKQLIVAGGVAANQGLKEAMNETLAVNFPDVDVIVPPLRLTGDNGAMIGAAAHIEWAKQHLASESLNADPGLSFTHAS.

His-115 and His-119 together coordinate Fe cation. Residues 137–141, Asp-170, Gly-183, Asp-187, and Asn-276 each bind substrate; that span reads AVSGG. Residue Asp-306 coordinates Fe cation.

This sequence belongs to the KAE1 / TsaD family. Fe(2+) serves as cofactor.

Its subcellular location is the cytoplasm. The enzyme catalyses L-threonylcarbamoyladenylate + adenosine(37) in tRNA = N(6)-L-threonylcarbamoyladenosine(37) in tRNA + AMP + H(+). Required for the formation of a threonylcarbamoyl group on adenosine at position 37 (t(6)A37) in tRNAs that read codons beginning with adenine. Is involved in the transfer of the threonylcarbamoyl moiety of threonylcarbamoyl-AMP (TC-AMP) to the N6 group of A37, together with TsaE and TsaB. TsaD likely plays a direct catalytic role in this reaction. This Lacticaseibacillus casei (strain BL23) (Lactobacillus casei) protein is tRNA N6-adenosine threonylcarbamoyltransferase.